We begin with the raw amino-acid sequence, 728 residues long: Polyribonucleotide nucleotidyltransferase (728 aa).

Mg(2+) contacts are provided by D488 and D494. The region spanning 555–614 is the KH domain; the sequence is PRMITMKIHPDKIREVIGKGGSTIQALTKETGTTIDIQEDGTITIASTSTDGMAEAKRRI. In terms of domain architecture, S1 motif spans 624-692; that stretch reads GKIYNGTVLK…EKGRLRLSLK (69 aa). Residues 702–728 are disordered; sequence ISPVNAGEAAPAPAPAAAPATPSDQQQ. Low complexity predominate over residues 710–721; that stretch reads AAPAPAPAAAPA.

This sequence belongs to the polyribonucleotide nucleotidyltransferase family. Mg(2+) serves as cofactor.

The protein localises to the cytoplasm. The catalysed reaction is RNA(n+1) + phosphate = RNA(n) + a ribonucleoside 5'-diphosphate. Involved in mRNA degradation. Catalyzes the phosphorolysis of single-stranded polyribonucleotides processively in the 3'- to 5'-direction. This is Polyribonucleotide nucleotidyltransferase from Cupriavidus pinatubonensis (strain JMP 134 / LMG 1197) (Cupriavidus necator (strain JMP 134)).